Consider the following 243-residue polypeptide: Homeobox protein nob-1 (243 aa).

The span at 1–12 shows a compositional bias: polar residues; it reads MISVMQQMINND. 2 disordered regions span residues 1 to 23 and 40 to 67; these read MISVMQQMINNDSPEDSKESITS and SIQGESRSERESETGSSPQLAPSSTGMV. Residues 162-221 constitute a DNA-binding region (homeobox); that stretch reads GKKKRQPYKKDQISRLEYEYSVNQYLTNKRRSELSAQLMLDEKQVKVWFQNRRMKDKKLR.

Belongs to the abd-b homeobox family. Interacts with nuclear receptor nhr-25. Interacts with geminin homolog gmn-1. Interacts with homeodomain protein ceh-20.

The protein localises to the nucleus. In terms of biological role, transcription factor, involved in posterior embryonic patterning, morphogenetic movements of the posterior hypodermis, and cell fate specification. Binds to the 5'-TAGT-3' motif in regulatory elements of genes, including Meis protein psa-3 and microRNA mir-57. Involved in a negative regulatory loop with mir-57 to specify posterior cell identities. Required for asymmetric division of the T hypodermal cell, acting via the regulation of asymmetric expression of psa-3 in cooperation with ceh-20 and the Wnt-MAPK pathway. Involved in the regulation of the onset of non-apoptotic cell death in the linker cell, acting together with the Wnt signaling pathway. Involved in promoting embryogenesis, in concert with orphan nuclear receptor nhr-25. May regulate expression of transcription factor dmd-3. This Caenorhabditis elegans protein is Homeobox protein nob-1.